A 148-amino-acid chain; its full sequence is Lysozyme C-1 (148 aa).

The first 18 residues, 1–18 (MKALLTLGLLLLSVTAQA), serve as a signal peptide directing secretion. The C-type lysozyme domain occupies 19 to 148 (KVYNRCELAR…LSQYIRNCGV (130 aa)). 4 disulfides stabilise this stretch: Cys-24–Cys-146, Cys-48–Cys-134, Cys-83–Cys-99, and Cys-95–Cys-113. Catalysis depends on residues Glu-53 and Asp-71.

The protein belongs to the glycosyl hydrolase 22 family. In terms of assembly, monomer. In terms of tissue distribution, expressed strongly only in small intestine.

The protein resides in the secreted. It catalyses the reaction Hydrolysis of (1-&gt;4)-beta-linkages between N-acetylmuramic acid and N-acetyl-D-glucosamine residues in a peptidoglycan and between N-acetyl-D-glucosamine residues in chitodextrins.. Its function is as follows. Lysozymes have primarily a bacteriolytic function; those in tissues and body fluids are associated with the monocyte-macrophage system and enhance the activity of immunoagents. Lyz1 is active against a range of Gram-positive and Gram-negative bacteria. Less effective than Lyz2 in killing Gram-negative bacteria. Lyz1 and Lyz2 are equally effective in killing Gram-positive bacteria. This Mus musculus (Mouse) protein is Lysozyme C-1 (Lyz1).